The chain runs to 83 residues: UPF0512 protein W (83 aa).

Belongs to the UPF0512 family.

In Dictyostelium discoideum (Social amoeba), this protein is UPF0512 protein W.